Here is a 410-residue protein sequence, read N- to C-terminus: Multifunctional CCA protein (410 aa).

Residues glycine 8 and arginine 11 each contribute to the ATP site. Positions 8 and 11 each coordinate CTP. 2 residues coordinate Mg(2+): glutamate 21 and aspartate 23. 3 residues coordinate ATP: arginine 91, arginine 137, and arginine 140. Arginine 91, arginine 137, and arginine 140 together coordinate CTP. An HD domain is found at 228–329 (TGIHSLMALR…VKLLEQVDAF (102 aa)).

The protein belongs to the tRNA nucleotidyltransferase/poly(A) polymerase family. Bacterial CCA-adding enzyme type 1 subfamily. In terms of assembly, monomer. Can also form homodimers and oligomers. Mg(2+) serves as cofactor. The cofactor is Ni(2+).

The enzyme catalyses a tRNA precursor + 2 CTP + ATP = a tRNA with a 3' CCA end + 3 diphosphate. It carries out the reaction a tRNA with a 3' CCA end + 2 CTP + ATP = a tRNA with a 3' CCACCA end + 3 diphosphate. In terms of biological role, catalyzes the addition and repair of the essential 3'-terminal CCA sequence in tRNAs without using a nucleic acid template. Adds these three nucleotides in the order of C, C, and A to the tRNA nucleotide-73, using CTP and ATP as substrates and producing inorganic pyrophosphate. tRNA 3'-terminal CCA addition is required both for tRNA processing and repair. Also involved in tRNA surveillance by mediating tandem CCA addition to generate a CCACCA at the 3' terminus of unstable tRNAs. While stable tRNAs receive only 3'-terminal CCA, unstable tRNAs are marked with CCACCA and rapidly degraded. This chain is Multifunctional CCA protein, found in Legionella pneumophila (strain Paris).